The primary structure comprises 444 residues: Glutamyl-tRNA reductase (444 aa).

Residues 49–52 (TCNR), serine 109, 114–116 (ETQ), and glutamine 120 each bind substrate. The Nucleophile role is filled by cysteine 50. 189–194 (GAGKMG) is an NADP(+) binding site.

The protein belongs to the glutamyl-tRNA reductase family. As to quaternary structure, homodimer.

It catalyses the reaction (S)-4-amino-5-oxopentanoate + tRNA(Glu) + NADP(+) = L-glutamyl-tRNA(Glu) + NADPH + H(+). The protein operates within porphyrin-containing compound metabolism; protoporphyrin-IX biosynthesis; 5-aminolevulinate from L-glutamyl-tRNA(Glu): step 1/2. In terms of biological role, catalyzes the NADPH-dependent reduction of glutamyl-tRNA(Glu) to glutamate 1-semialdehyde (GSA). The sequence is that of Glutamyl-tRNA reductase from Bacillus cereus (strain 03BB102).